We begin with the raw amino-acid sequence, 1034 residues long: Platelet endothelial aggregation receptor 1 (1034 aa).

The first 18 residues, 1 to 18, serve as a signal peptide directing secretion; that stretch reads MPLCPLLLLALGLRLTGT. The Extracellular segment spans residues 19-754; sequence LNSNDPNVCT…PTSPVTHNSL (736 aa). Residues 23-101 form the EMI domain; sequence DPNVCTFWES…YYESRGACVP (79 aa). Intrachain disulfides connect Cys27–Cys89, Cys53–Cys63, and Cys88–Cys99. N-linked (GlcNAc...) asparagine glycosylation is present at Asn150. 5 EGF-like domains span residues 181–215, 223–258, 266–301, 309–344, and 398–433; these read YGPACQFDCQCYGASCDPQDGACFCPPGRAGPSCN, DGFFCPRTYPCQNGGVPQGSQGSCSCPPGWMGVICS, HGPNCTQECRCHNGGLCDRFTGQCHCAPGYIGDRCQ, FGQDCAETCDCAPGARCFPANGACLCEHGFTGDRCT, and HGPGCQEHCLCLHGGLCLADSGLCRCAPGYTGPHCA. 5 disulfides stabilise this stretch: Cys185/Cys196, Cys189/Cys203, Cys205/Cys214, Cys233/Cys246, and Cys248/Cys257. Asn269 is a glycosylation site (N-linked (GlcNAc...) asparagine). 9 cysteine pairs are disulfide-bonded: Cys270–Cys282, Cys276–Cys289, Cys291–Cys300, Cys313–Cys325, Cys319–Cys332, Cys334–Cys343, Cys402–Cys414, Cys408–Cys421, and Cys423–Cys432. A glycan (N-linked (GlcNAc...) asparagine) is linked at Asn474. EGF-like domains are found at residues 484-519, 575-605, 613-648, and 656-691; these read WGFNCNASCQCAHDGVCSPQTGACTCTPGWHGAHCQ, SNTCTCKNGGTCVSENGNCVCAPGFRGPSCQ, YGKRCVQCKCNNNHSSCHPSDGTCSCLAGWTGPDCS, and WGLKCSQLCQCHHGGTCHPQDGSCICTPGWTGPNCL. Intrachain disulfides connect Cys488-Cys500, Cys494-Cys507, Cys509-Cys518, Cys578-Cys586, Cys580-Cys593, Cys595-Cys604, Cys617-Cys629, Cys622-Cys636, Cys638-Cys647, Cys660-Cys672, Cys666-Cys679, and Cys681-Cys690. The helical transmembrane segment at 755-775 threads the bilayer; that stretch reads GAVIGIAVLGTLVVALIALFI. Over 776-1034 the chain is Cytoplasmic; sequence GYRQWQKGKE…PSPPSRRQDR (259 aa). The disordered stretch occupies residues 823 to 883; it reads TLSQCSPNPP…PHERGASHLD (61 aa). Over residues 851 to 883 the composition is skewed to basic and acidic residues; the sequence is RPSRAHGRENHVTLPADWKHRREPHERGASHLD. Tyr923 is subject to Phosphotyrosine. The interval 925-1034 is disordered; the sequence is TIRDLPSLPG…PSPPSRRQDR (110 aa). At Ser951 the chain carries Phosphoserine. The span at 972–991 shows a compositional bias: polar residues; the sequence is DSGTYEQPSPLSHNEESLGS. Residue Ser1026 is modified to Phosphoserine.

It belongs to the MEGF family. Interacts with SHC2 upon its aggregation-induced tyrosine phosphorylation. Interacts (via extracellular domain) with SVEP1. In terms of processing, phosphorylated in the intracellular domain on tyrosine residues. Phosphorylated on tyrosine residues by SRC. Tyrosine phosphorylation is detected upon platelet aggregation stimulated by collagen, TRAP and thrombin and platelet-platelet contacts but not after platelet activation. Tyrosine phosphorylation enhanced its association with SHC1 and SHC2. Phosphorylated in the intracellular domain on tyrosine residues. Phosphorylated when in the presence of SVEP1. In terms of tissue distribution, expressed in thymocytes, bone marrow stromal and osteogenic cells (at protein level). Strongly expressed in kidney and heart. Moderately expressed in lung, spleen, thymus, liver, brain, testis, skin and stomach. Expressed in hematopoietic stem progenitor cells.

It localises to the cell membrane. The protein localises to the cell projection. It is found in the lamellipodium. Its function is as follows. Required for SVEP1-mediated platelet activation, via its interaction with SVEP1 and subsequent activation of AKT/mTOR signaling. May be involved in the early stages of hematopoiesis. This chain is Platelet endothelial aggregation receptor 1 (Pear1), found in Mus musculus (Mouse).